The chain runs to 182 residues: ATP-dependent protease subunit HslV (182 aa).

The active site involves Thr2. Na(+) contacts are provided by Gly157, Cys160, and Thr163.

This sequence belongs to the peptidase T1B family. HslV subfamily. As to quaternary structure, a double ring-shaped homohexamer of HslV is capped on each side by a ring-shaped HslU homohexamer. The assembly of the HslU/HslV complex is dependent on binding of ATP.

The protein localises to the cytoplasm. It catalyses the reaction ATP-dependent cleavage of peptide bonds with broad specificity.. Allosterically activated by HslU binding. In terms of biological role, protease subunit of a proteasome-like degradation complex believed to be a general protein degrading machinery. This is ATP-dependent protease subunit HslV from Vibrio atlanticus (strain LGP32) (Vibrio splendidus (strain Mel32)).